The sequence spans 289 residues: Phospholipase C (289 aa).

The signal sequence occupies residues 1–25 (MKFKKVVLGMCLIASVLVFPVTIKA). Residues 26 to 51 (NACCDEYLQTPAAPHDIDSKLPHKLS) constitute a propeptide that is removed on maturation. Residues tryptophan 52, histidine 65, aspartate 106, histidine 120, histidine 169, aspartate 173, histidine 179, histidine 193, and glutamate 197 each contribute to the Zn(2+) site. The region spanning 52-289 (WSADNPTNTD…LEFWSKKTNE (238 aa)) is the Zn-dependent PLC domain.

Belongs to the bacterial zinc-metallophospholipase C family. Forms monomers, dimers and higher order oligomers, but only the monomer is enzymatically active. Requires Zn(2+) as cofactor.

It localises to the secreted. The catalysed reaction is a 1,2-diacyl-sn-glycero-3-phosphocholine + H2O = phosphocholine + a 1,2-diacyl-sn-glycerol + H(+). It carries out the reaction 1,2-dihexadecanoyl-sn-glycero-3-phosphocholine + H2O = 1,2-dihexadecanoyl-sn-glycerol + phosphocholine + H(+). It catalyses the reaction 1-hexadecanoyl-2-(9Z-octadecenoyl)-sn-glycero-3-phosphocholine + H2O = 1-hexadecanoyl-2-(9Z-octadecenoyl)-sn-glycerol + phosphocholine + H(+). The enzyme catalyses 1,2-di-(9Z-octadecenoyl)-sn-glycero-3-phosphocholine + H2O = 1,2-di-(9Z-octadecenoyl)-sn-glycerol + phosphocholine + H(+). The catalysed reaction is a 1,2-diacyl-sn-glycero-3-phosphoethanolamine + H2O = phosphoethanolamine + a 1,2-diacyl-sn-glycerol + H(+). It carries out the reaction 1,2-di-(9Z-octadecenoyl)-sn-glycero-3-phosphoethanolamine + H2O = phosphoethanolamine + 1,2-di-(9Z-octadecenoyl)-sn-glycerol + H(+). It catalyses the reaction 1,2-dihexadecanoyl-sn-glycero-3-phosphoethanolamine + H2O = 1,2-dihexadecanoyl-sn-glycerol + phosphoethanolamine + H(+). The enzyme catalyses a 1,2-diacyl-sn-glycero-3-phospho-L-serine + H2O = O-phospho-L-serine + a 1,2-diacyl-sn-glycerol + H(+). The catalysed reaction is a 1,2-diacyl-sn-glycero-3-phosphoglycerol + H2O = glycerol 1-phosphate + a 1,2-diacyl-sn-glycerol + H(+). It carries out the reaction a 1,2-diacyl-sn-glycero-3-phospho-(1D-myo-inositol) + H2O = 1D-myo-inositol 1-phosphate + a 1,2-diacyl-sn-glycerol + H(+). It catalyses the reaction a sphingomyelin + H2O = phosphocholine + an N-acylsphing-4-enine + H(+). The enzyme catalyses a 1-O-(1Z-alkenyl)-2-acyl-sn-glycero-3-phosphoethanolamine + H2O = a 1-O-(1Z-alkenyl)-2-acyl-sn-glycerol + phosphoethanolamine + H(+). Enzymatic activity of LmPC-PLC can be specifically inhibited by its propeptide added in trans. The tendency of the enzyme to oligomerize, which appears to largely attenuate the enzymatic activity, may be one of the mechanisms regulating phospholipase activity in the host cell during the different steps of the infection cycle of L.monocytogenes. Enzyme activity is inhibited by EDTA and o-phenanthroline in vitro. Major virulence factor whose phospholipase activity facilitates pore formation by the pore-forming toxin listeriolysin O (LLO), leading to vacuolar membrane disruption and vacuolar escape of L.monocytogenes, which enables the bacterium to spread in the host. Acts as a phospholipase C exhibiting broad substrate specificity, with the highest activities towards diacylglycerophospholipids with phosphocholine, phosphoserine, and phosphoethanolamine head groups, but less towards phosphoglycerol or phosphoinositol head groups. Is also able to hydrolyze sphingomyelin and plasmenylethanolamine. This Listeria monocytogenes serovar 1/2a (strain ATCC BAA-679 / EGD-e) protein is Phospholipase C.